Here is a 145-residue protein sequence, read N- to C-terminus: D-aminoacyl-tRNA deacylase (145 aa).

Residues 137–138 (GP) carry the Gly-cisPro motif, important for rejection of L-amino acids motif.

Belongs to the DTD family. As to quaternary structure, homodimer.

It is found in the cytoplasm. The catalysed reaction is glycyl-tRNA(Ala) + H2O = tRNA(Ala) + glycine + H(+). The enzyme catalyses a D-aminoacyl-tRNA + H2O = a tRNA + a D-alpha-amino acid + H(+). Its function is as follows. An aminoacyl-tRNA editing enzyme that deacylates mischarged D-aminoacyl-tRNAs. Also deacylates mischarged glycyl-tRNA(Ala), protecting cells against glycine mischarging by AlaRS. Acts via tRNA-based rather than protein-based catalysis; rejects L-amino acids rather than detecting D-amino acids in the active site. By recycling D-aminoacyl-tRNA to D-amino acids and free tRNA molecules, this enzyme counteracts the toxicity associated with the formation of D-aminoacyl-tRNA entities in vivo and helps enforce protein L-homochirality. The sequence is that of D-aminoacyl-tRNA deacylase from Shewanella sp. (strain MR-4).